Consider the following 605-residue polypeptide: Tyrosyl-DNA phosphodiesterase 1 (605 aa).

Positions 81-86 match the Nuclear localization signal motif; it reads RKKVKP. Residue H236 is the Nucleophile of the active site. K238 is a substrate binding site. Residues 379–382 form an interaction with DNA region; the sequence is SLGS. H466 acts as the Proton donor/acceptor in catalysis. K468 is a binding site for substrate.

It belongs to the tyrosyl-DNA phosphodiesterase family. As to expression, ubiquitous, with a low level in roots.

Its subcellular location is the nucleus. Inhibited by vanadate analogs. DNA repair enzyme that can remove a variety of covalent adducts from DNA through hydrolysis of a 3'-phosphodiester bond, giving rise to DNA with a free 3' phosphate. Catalyzes the hydrolysis of dead-end complexes between DNA and the topoisomerase I active site tyrosine residue. In Arabidopsis thaliana (Mouse-ear cress), this protein is Tyrosyl-DNA phosphodiesterase 1.